Reading from the N-terminus, the 202-residue chain is HGRGMKHSLPDLPYDYGALEPHINAQIMELHHSKHHAAYVNNLNATEEKYREALARGDVTAHVALQPALKFKGGGHINHTIFWTNLSPNGGGEPKGELLEAIKRDFGSFDKFKERLTAVSVGVQGSGWGWLGFNKEQGHLQIAACANQDPLQGTTGLIPLLGIDVWEHAYYLQYKNVRPDYLKAIWNVITWENVTERYMACK.

Residues 1–5 constitute a mitochondrion transit peptide; sequence HGRGM. His31 contributes to the Mn(2+) binding site. Position 39 is a 3'-nitrotyrosine (Tyr39). At Lys49 the chain carries N6-acetyllysine; alternate. Position 49 is an N6-succinyllysine; alternate (Lys49). His79 lines the Mn(2+) pocket. The residue at position 95 (Lys95) is an N6-acetyllysine. Lys103 and Lys111 each carry N6-acetyllysine; alternate. Lys103 and Lys111 each carry N6-succinyllysine; alternate. Mn(2+)-binding residues include Asp164 and His168. At Lys183 the chain carries N6-acetyllysine.

The protein belongs to the iron/manganese superoxide dismutase family. In terms of assembly, homotetramer. Mn(2+) is required as a cofactor. Post-translationally, nitrated under oxidative stress. Nitration coupled with oxidation inhibits the catalytic activity. Acetylation at Lys-122 decreases enzymatic activity. Deacetylated by SIRT3 upon exposure to ionizing radiations or after long fasting. In terms of processing, polyubiquitinated; leading to proteasomal degradation. Deubiquitinated by USP36 which increases protein stability.

The protein localises to the mitochondrion matrix. It carries out the reaction 2 superoxide + 2 H(+) = H2O2 + O2. Functionally, destroys superoxide anion radicals which are normally produced within the cells and which are toxic to biological systems. The polypeptide is Superoxide dismutase [Mn], mitochondrial (SOD2) (Oryctolagus cuniculus (Rabbit)).